The chain runs to 373 residues: Leucine aminopeptidase 1 (373 aa).

The N-terminal stretch at 1–18 is a signal peptide; sequence MKLLSVLALSATASSVLG. Residues 19-75 constitute a propeptide that is removed on maturation; sequence ASIPVDTRAEKFLIELAPGETRWVTEEEKWALKESGQDFFDITDEEVGFTAAVAQPA. 2 residues coordinate Zn(2+): His-176 and Asp-195. N-linked (GlcNAc...) asparagine glycosylation is present at Asn-196. Positions 234 and 261 each coordinate Zn(2+). Asn-288 carries an N-linked (GlcNAc...) asparagine glycan. A disulfide bridge links Cys-310 with Cys-314. His-343 is a binding site for Zn(2+). Residue Asn-348 is glycosylated (N-linked (GlcNAc...) asparagine).

This sequence belongs to the peptidase M28 family. M28E subfamily. As to quaternary structure, monomer. The cofactor is Zn(2+).

The protein localises to the secreted. Its function is as follows. Extracellular aminopeptidase that allows assimilation of proteinaceous substrates. The chain is Leucine aminopeptidase 1 (LAP1) from Arthroderma gypseum (strain ATCC MYA-4604 / CBS 118893) (Microsporum gypseum).